Here is a 404-residue protein sequence, read N- to C-terminus: Trigger factor (404 aa).

The PPIase FKBP-type domain occupies 160–225 (KDHLFVRTEE…VLEVKTLKLP (66 aa)).

Belongs to the FKBP-type PPIase family. Tig subfamily.

The protein resides in the cytoplasm. It catalyses the reaction [protein]-peptidylproline (omega=180) = [protein]-peptidylproline (omega=0). Involved in protein export. Acts as a chaperone by maintaining the newly synthesized protein in an open conformation. Functions as a peptidyl-prolyl cis-trans isomerase. The protein is Trigger factor of Thermus thermophilus (strain ATCC 27634 / DSM 579 / HB8).